A 117-amino-acid polypeptide reads, in one-letter code: Large ribosomal subunit protein bL20 (117 aa).

Belongs to the bacterial ribosomal protein bL20 family.

Functionally, binds directly to 23S ribosomal RNA and is necessary for the in vitro assembly process of the 50S ribosomal subunit. It is not involved in the protein synthesizing functions of that subunit. The protein is Large ribosomal subunit protein bL20 of Vibrio campbellii (strain ATCC BAA-1116).